The following is a 264-amino-acid chain: Thymidylate synthase 2 (264 aa).

A dUMP-binding site is contributed by arginine 21. (6R)-5,10-methylene-5,6,7,8-tetrahydrofolate is bound at residue histidine 51. Arginine 126–arginine 127 lines the dUMP pocket. The active-site Nucleophile is the cysteine 146. Residues arginine 166 to aspartate 169, asparagine 177, and histidine 207 to tyrosine 209 contribute to the dUMP site. Aspartate 169 lines the (6R)-5,10-methylene-5,6,7,8-tetrahydrofolate pocket. A (6R)-5,10-methylene-5,6,7,8-tetrahydrofolate-binding site is contributed by serine 263.

The protein belongs to the thymidylate synthase family. Bacterial-type ThyA subfamily. As to quaternary structure, homodimer.

The protein localises to the cytoplasm. The catalysed reaction is dUMP + (6R)-5,10-methylene-5,6,7,8-tetrahydrofolate = 7,8-dihydrofolate + dTMP. The protein operates within pyrimidine metabolism; dTTP biosynthesis. In terms of biological role, catalyzes the reductive methylation of 2'-deoxyuridine-5'-monophosphate (dUMP) to 2'-deoxythymidine-5'-monophosphate (dTMP) while utilizing 5,10-methylenetetrahydrofolate (mTHF) as the methyl donor and reductant in the reaction, yielding dihydrofolate (DHF) as a by-product. This enzymatic reaction provides an intracellular de novo source of dTMP, an essential precursor for DNA biosynthesis. This is Thymidylate synthase 2 from Bacillus amyloliquefaciens (Bacillus velezensis).